A 429-amino-acid polypeptide reads, in one-letter code: Histidinol dehydrogenase (429 aa).

Tyr127, Gln188, and Asn211 together coordinate NAD(+). 3 residues coordinate substrate: Ser234, Gln256, and His259. Zn(2+)-binding residues include Gln256 and His259. Residues Glu324 and His325 each act as proton acceptor in the active site. The substrate site is built by His325, Asp358, Glu412, and His417. Asp358 serves as a coordination point for Zn(2+). His417 provides a ligand contact to Zn(2+).

The protein belongs to the histidinol dehydrogenase family. Requires Zn(2+) as cofactor.

The catalysed reaction is L-histidinol + 2 NAD(+) + H2O = L-histidine + 2 NADH + 3 H(+). It functions in the pathway amino-acid biosynthesis; L-histidine biosynthesis; L-histidine from 5-phospho-alpha-D-ribose 1-diphosphate: step 9/9. Catalyzes the sequential NAD-dependent oxidations of L-histidinol to L-histidinaldehyde and then to L-histidine. This is Histidinol dehydrogenase from Bacillus cereus (strain ATCC 14579 / DSM 31 / CCUG 7414 / JCM 2152 / NBRC 15305 / NCIMB 9373 / NCTC 2599 / NRRL B-3711).